A 298-amino-acid polypeptide reads, in one-letter code: Ribonuclease HII (298 aa).

Residues methionine 1–arginine 57 are disordered. Low complexity predominate over residues serine 8–lysine 55. In terms of domain architecture, RNase H type-2 spans tryptophan 85 to glycine 273. A divalent metal cation is bound by residues aspartate 91, glutamate 92, and aspartate 182.

This sequence belongs to the RNase HII family. The cofactor is Mn(2+). Requires Mg(2+) as cofactor.

The protein localises to the cytoplasm. It carries out the reaction Endonucleolytic cleavage to 5'-phosphomonoester.. Functionally, endonuclease that specifically degrades the RNA of RNA-DNA hybrids. The chain is Ribonuclease HII from Rhodopseudomonas palustris (strain BisB5).